The chain runs to 87 residues: Small ribosomal subunit protein uS15 (87 aa).

Belongs to the universal ribosomal protein uS15 family. Part of the 30S ribosomal subunit. Forms a bridge to the 50S subunit in the 70S ribosome, contacting the 23S rRNA.

In terms of biological role, one of the primary rRNA binding proteins, it binds directly to 16S rRNA where it helps nucleate assembly of the platform of the 30S subunit by binding and bridging several RNA helices of the 16S rRNA. Its function is as follows. Forms an intersubunit bridge (bridge B4) with the 23S rRNA of the 50S subunit in the ribosome. This chain is Small ribosomal subunit protein uS15, found in Clostridium beijerinckii (strain ATCC 51743 / NCIMB 8052) (Clostridium acetobutylicum).